We begin with the raw amino-acid sequence, 1661 residues long: ATP-dependent bile acid permease (1661 aa).

Topologically, residues 1-33 (MHHVLNSTRPDHRFWFYDDVTQYGRTKYLNYYT) are lumenal. An N-linked (GlcNAc...) asparagine glycan is attached at asparagine 6. Residues 34–54 (PLVLLIFTVLFITYNIWKHYY) traverse the membrane as a helical segment. At 55–74 (YYDVLHLKQKNPIDELLYSS) the chain is on the cytoplasmic side. The helical transmembrane segment at 75–95 (TDEDEQSPLINNNTITTNYVD) threads the bilayer. Residues 96–133 (NNCTKDALKNRHFSLEKLKSVKVNGEPHGTPEIVRRGF) lie on the Lumenal side of the membrane. N-linked (GlcNAc...) asparagine glycosylation occurs at asparagine 97. A helical transmembrane segment spans residues 134-154 (IEKSRIILEFFLVLSQVIIHS). At 155-166 (FILLHYVNKNPE) the chain is on the cytoplasmic side. The helical transmembrane segment at 167 to 187 (FTQQGTITGLVEWCALFIIVS) threads the bilayer. Topologically, residues 188–205 (LRLANVNQNFKFINKYPG) are lumenal. Residues 206–226 (NLWSVSFINYLALFISMILPF) traverse the membrane as a helical segment. At 227-345 (RSIFIHHINS…VKRKRIFSLN (119 aa)) the chain is on the cytoplasmic side. Residues 346–366 (LFFFFSNYLVLQCFWAFLGSV) traverse the membrane as a helical segment. The 309-residue stretch at 354–662 (LVLQCFWAFL…LSDMLSFVVQ (309 aa)) folds into the ABC transmembrane type-1 1 domain. At 367–393 (LSFIPTVLLKRILEYVEDQSSAPSNLA) the chain is on the lumenal side. The helical transmembrane segment at 394 to 414 (WFYVTVMFVGRILVAICQAQA) threads the bilayer. At 415–495 (LFFGRRVCIR…AFKVSEICGY (81 aa)) the chain is on the cytoplasmic side. The disordered stretch occupies residues 445-468 (NKTKPSNEDPQEINDQKSINGDEE). A helical membrane pass occupies residues 496–516 (LHSFLEAFVMTVVALALLYRL). The Lumenal segment spans residues 517–519 (LGF). A helical transmembrane segment spans residues 520-540 (AAIVGVLIIVAMLPLNYKLAK). Residues 541–602 (YIGDLQKKNL…LLLMRSIVWS (62 aa)) lie on the Cytoplasmic side of the membrane. A helical membrane pass occupies residues 603–623 (ISSFLWFVTPTIVTAASFAYY). The Lumenal portion of the chain corresponds to 624–644 (IYVQGEVLTTPVAFTALSLFT). Residues 645–665 (LLRDPLDRLSDMLSFVVQSKV) form a helical membrane-spanning segment. The Cytoplasmic portion of the chain corresponds to 666–1053 (SLDRVQDFLN…SWWVRAWASH (388 aa)). In terms of domain architecture, ABC transporter 1 spans 694–935 (FAFENSTISW…GLFGEDELVK (242 aa)). 729–736 (GPTGSGKT) lines the ATP pocket. Phosphoserine occurs at positions 936, 940, and 955. Residues 1026–1345 (VSFLASLFLI…LVRLYSEVEM (320 aa)) form the ABC transmembrane type-1 2 domain. Residues 1054–1074 (NVIAKIIPRAQRAIAFISKKA) traverse the membrane as a helical segment. Over 1075–1114 (SHLIDWRGSSQISMASAENQPSSGHSTMYYLVLYLIIGFA) the chain is Lumenal. Residues 1115-1135 (QALLGAGKTILNFVAGINASR) traverse the membrane as a helical segment. Residues 1136–1178 (KIFNMILNKVLHSKIRFFDATPTGRIMNRFSKDIEAIDQELTP) are Cytoplasmic-facing. The chain crosses the membrane as a helical span at residues 1179 to 1199 (YIQGAFYSLIECLSTVILITF). Isoleucine 1200 is a topological domain (lumenal). Residues 1201–1221 (TPQFLSVAIVVSILYYFVGYF) traverse the membrane as a helical segment. Over 1222–1292 (YMAGSRELKR…VANRWLAFRI (71 aa)) the chain is Cytoplasmic. The helical transmembrane segment at 1293–1313 (DMIGSLVIFGAGLFILFNINN) threads the bilayer. Residues 1314–1315 (LD) are Lumenal-facing. The chain crosses the membrane as a helical span at residues 1316-1336 (SGMAGISLTYAISFTEGALWL). The Cytoplasmic portion of the chain corresponds to 1337–1661 (VRLYSEVEMN…FVEKLNSKKD (325 aa)). In terms of domain architecture, ABC transporter 2 spans 1381–1636 (IEVNDLSLRY…KQSAFYSMCE (256 aa)). 1415–1422 (GRTGAGKS) contacts ATP.

It belongs to the ABC transporter superfamily. ABCC family. Conjugate transporter (TC 3.A.1.208) subfamily.

Its subcellular location is the vacuole membrane. Vacuolar class C ABC transporter which regulates the translocation of phosphatidylcholine to the vacuole lumen, the release of lumenal calcium stores, and acts as a negative regulator of vacuole fusion. Exhibits ATP-dependent bile acid transport. In Saccharomyces cerevisiae (strain ATCC 204508 / S288c) (Baker's yeast), this protein is ATP-dependent bile acid permease (YBT1).